An 88-amino-acid polypeptide reads, in one-letter code: UPF0335 protein Mnod_5968 (88 aa).

Belongs to the UPF0335 family.

The protein is UPF0335 protein Mnod_5968 of Methylobacterium nodulans (strain LMG 21967 / CNCM I-2342 / ORS 2060).